Consider the following 339-residue polypeptide: DNA-directed RNA polymerase subunit alpha (339 aa).

The interval 1 to 233 (MVREEVAGST…DLFLPFLHAE (233 aa)) is alpha N-terminal domain (alpha-NTD). An alpha C-terminal domain (alpha-CTD) region spans residues 264-339 (KKGIPLNCIF…IDLLKNKLSF (76 aa)).

It belongs to the RNA polymerase alpha chain family. In terms of assembly, in plastids the minimal PEP RNA polymerase catalytic core is composed of four subunits: alpha, beta, beta', and beta''. When a (nuclear-encoded) sigma factor is associated with the core the holoenzyme is formed, which can initiate transcription.

Its subcellular location is the plastid. The protein localises to the chloroplast. It carries out the reaction RNA(n) + a ribonucleoside 5'-triphosphate = RNA(n+1) + diphosphate. Functionally, DNA-dependent RNA polymerase catalyzes the transcription of DNA into RNA using the four ribonucleoside triphosphates as substrates. This chain is DNA-directed RNA polymerase subunit alpha, found in Psathyrostachys stoloniformis.